The primary structure comprises 206 residues: Small ribosomal subunit protein uS4 (206 aa).

An S4 RNA-binding domain is found at 96-156; that stretch reads GRLDNVVYRM…EKSKKQARIK (61 aa).

The protein belongs to the universal ribosomal protein uS4 family. As to quaternary structure, part of the 30S ribosomal subunit. Contacts protein S5. The interaction surface between S4 and S5 is involved in control of translational fidelity.

Functionally, one of the primary rRNA binding proteins, it binds directly to 16S rRNA where it nucleates assembly of the body of the 30S subunit. In terms of biological role, with S5 and S12 plays an important role in translational accuracy. The sequence is that of Small ribosomal subunit protein uS4 from Histophilus somni (strain 129Pt) (Haemophilus somnus).